A 354-amino-acid chain; its full sequence is Protein REDOX 1 (354 aa).

Position 44 (Cys44) interacts with Zn(2+). 45–49 is an NAD(+) binding site; that stretch reads HSDLH. Zn(2+) contacts are provided by His66, Cys97, Cys100, Cys103, and Cys111. NAD(+) is bound by residues 185 to 190, Lys214, 271 to 273, 295 to 297, and Arg340; these read GLGGLG, VGA, and SAV.

The protein belongs to the zinc-containing alcohol dehydrogenase family. It depends on Zn(2+) as a cofactor. As to expression, expressed in leaf epidermis.

The enzyme catalyses 3,17-didehydrostemmadenine + NADPH + H2O = (16S)-deshydroxymethyl-stemmadenine + formate + NADP(+). It carries out the reaction 3,17-didehydrostemmadenine + NADPH + H2O = (16R)-deshydroxymethyl-stemmadenine + formate + NADP(+). It catalyses the reaction 17-dehydrostemmadenine + NADP(+) = 3,17-didehydrostemmadenine + NADPH. The protein operates within alkaloid biosynthesis. In terms of biological role, component of iboga and aspidosperma monoterpenoid indole alkaloids (MIAs, e.g. tabersonine and catharanthine) biosynthesis pathway from 19E-geissoschizine. Catalyzes the first oxidation step of the unstable intermediate product resulting from the reaction triggered by the geissoschizine oxidase (GO) in the stemmadenine biosynthesis process from 19E-geissoschizine. The protein is Protein REDOX 1 of Catharanthus roseus (Madagascar periwinkle).